A 374-amino-acid chain; its full sequence is 4-hydroxy-3-methylbut-2-en-1-yl diphosphate synthase (flavodoxin) (374 aa).

Residues C268, C271, C303, and E310 each coordinate [4Fe-4S] cluster.

It belongs to the IspG family. [4Fe-4S] cluster serves as cofactor.

The catalysed reaction is (2E)-4-hydroxy-3-methylbut-2-enyl diphosphate + oxidized [flavodoxin] + H2O + 2 H(+) = 2-C-methyl-D-erythritol 2,4-cyclic diphosphate + reduced [flavodoxin]. It functions in the pathway isoprenoid biosynthesis; isopentenyl diphosphate biosynthesis via DXP pathway; isopentenyl diphosphate from 1-deoxy-D-xylulose 5-phosphate: step 5/6. Functionally, converts 2C-methyl-D-erythritol 2,4-cyclodiphosphate (ME-2,4cPP) into 1-hydroxy-2-methyl-2-(E)-butenyl 4-diphosphate. The chain is 4-hydroxy-3-methylbut-2-en-1-yl diphosphate synthase (flavodoxin) from Geobacillus kaustophilus (strain HTA426).